Consider the following 577-residue polypeptide: Arginine--tRNA ligase (577 aa).

The 'HIGH' region signature appears at 122-132 (PNVAKEMHVGH).

This sequence belongs to the class-I aminoacyl-tRNA synthetase family. As to quaternary structure, monomer.

The protein resides in the cytoplasm. The enzyme catalyses tRNA(Arg) + L-arginine + ATP = L-arginyl-tRNA(Arg) + AMP + diphosphate. The chain is Arginine--tRNA ligase from Shigella dysenteriae serotype 1 (strain Sd197).